Consider the following 287-residue polypeptide: Inositol-1-monophosphatase (287 aa).

Mg(2+) contacts are provided by Glu-79, Asp-96, Leu-98, and Asp-99. Substrate is bound at residue Glu-79. Substrate contacts are provided by residues 98 to 101, Arg-195, and Asp-224; that span reads LDGT. Position 224 (Asp-224) interacts with Mg(2+).

This sequence belongs to the inositol monophosphatase superfamily. It depends on Mg(2+) as a cofactor.

It catalyses the reaction a myo-inositol phosphate + H2O = myo-inositol + phosphate. The chain is Inositol-1-monophosphatase (suhB) from Synechocystis sp. (strain ATCC 27184 / PCC 6803 / Kazusa).